The primary structure comprises 149 residues: 3-dehydroquinate dehydratase (149 aa).

Residue Y26 is the Proton acceptor of the active site. Positions 77, 83, and 90 each coordinate substrate. H103 functions as the Proton donor in the catalytic mechanism. Substrate contacts are provided by residues 104–105 (LS) and R114.

Belongs to the type-II 3-dehydroquinase family. In terms of assembly, homododecamer.

The catalysed reaction is 3-dehydroquinate = 3-dehydroshikimate + H2O. It functions in the pathway metabolic intermediate biosynthesis; chorismate biosynthesis; chorismate from D-erythrose 4-phosphate and phosphoenolpyruvate: step 3/7. In terms of biological role, catalyzes a trans-dehydration via an enolate intermediate. The chain is 3-dehydroquinate dehydratase from Haemophilus influenzae (strain 86-028NP).